The sequence spans 314 residues: Olfactory receptor 9I1 (314 aa).

The Extracellular portion of the chain corresponds to 1-25 (MAKNNLTRVTEFILMGFMDHPKLEI). Asn-5 carries an N-linked (GlcNAc...) asparagine glycan. A helical transmembrane segment spans residues 26 to 46 (PLFLVFLSFYLVTLLGNVGMI). At 47-54 (MLIQVDVK) the chain is on the cytoplasmic side. A helical transmembrane segment spans residues 55-75 (LYTPMYFFLSHLSLLDACYTS). Over 76-99 (VITPQILATLATGKTVISYGHCAA) the chain is Extracellular. Cysteines 97 and 189 form a disulfide. Residues 100–120 (QFFLFTICAGTECFLLAVMAY) form a helical membrane-spanning segment. Residues 121-139 (DRYAAIRNPLLYTVAMNPR) lie on the Cytoplasmic side of the membrane. Residues 140-160 (LCWSLVVGAYVCGVSGAILRT) form a helical membrane-spanning segment. The Extracellular segment spans residues 161–197 (TCTFTLSFCKDNQINFFFCDLPPLLKLACSDTANIEI). The chain crosses the membrane as a helical span at residues 198 to 217 (VIIFFGNFVILANASVILIS). Topologically, residues 218–237 (YLLIIKTILKVKSSGGRAKT) are cytoplasmic. The chain crosses the membrane as a helical span at residues 238–258 (FSTCASHITAVALFFGALIFM). Topologically, residues 259–271 (YLQSGSGKSLEED) are extracellular. The helical transmembrane segment at 272–292 (KVVSVFYTVVIPMLNPLIYSL) threads the bilayer. Over 293–314 (RNKDVKDAFRKVARRLQVSLSM) the chain is Cytoplasmic.

It belongs to the G-protein coupled receptor 1 family.

It is found in the cell membrane. Functionally, odorant receptor. The protein is Olfactory receptor 9I1 (OR9I1) of Homo sapiens (Human).